The sequence spans 620 residues: Nuclear cap-binding protein subunit 3 (620 aa).

K12 participates in a covalent cross-link: Glycyl lysine isopeptide (Lys-Gly) (interchain with G-Cter in SUMO2). The span at 15–28 shows a compositional bias: low complexity; the sequence is APAGPALGLPSPEA. Residues 15 to 42 are disordered; sequence APAGPALGLPSPEAESGVDRGEPEPMEV. The residue at position 25 (S25) is a Phosphoserine. K70 participates in a covalent cross-link: Glycyl lysine isopeptide (Lys-Gly) (interchain with G-Cter in SUMO2). A Phosphoserine modification is found at S73. Residues 126-187 are RNA recognition motif (RRM) domain; sequence ETIYICGVDE…MSSLPAQDKI (62 aa). Residues 155-158 carry the WLDD motif; essential for 7-methylguanosine-containing mRNA cap binding motif; the sequence is WLDD. Residues 185–198 show a composition bias toward basic and acidic residues; sequence DKIRSRDASEDKSA. Disordered regions lie at residues 185-233, 332-419, and 436-620; these read DKIR…LDTL, HSGL…PKKS, and IRNS…EAES. K186 is covalently cross-linked (Glycyl lysine isopeptide (Lys-Gly) (interchain with G-Cter in SUMO2)). Residues S209 and S210 each carry the phosphoserine modification. Composition is skewed to acidic residues over residues 209–230 and 341–365; these read SSDDDEAEEGEVEDENSSDVEL and EPIEEEEEEEEEEEEEEEEDQDMDA. Residues 366 to 388 show a composition bias toward basic and acidic residues; the sequence is DDRVVVEYHEELPALKQPRERSA. T413 carries the phosphothreonine modification. S415 is subject to Phosphoserine. 2 stretches are compositionally biased toward basic and acidic residues: residues 459 to 474 and 511 to 521; these read PPEKFADVRHLLDEKR and VRREPSSDVHS. K541 participates in a covalent cross-link: Glycyl lysine isopeptide (Lys-Gly) (interchain with G-Cter in SUMO2). 2 stretches are compositionally biased toward basic and acidic residues: residues 554 to 569 and 585 to 598; these read KTKEKNTKKVDHRAPG and IKEKEQSRQKKSRL. The span at 611–620 shows a compositional bias: low complexity; the sequence is ESSSGSEAES. S620 carries the post-translational modification Phosphoserine.

It belongs to the NCBP3 family. As to quaternary structure, component of an alternative cap-binding complex (CBC) composed of NCBP1/CBP80 and NCBP3. Interacts with SRRT, KPNA3, THOC5 and EIF4A3.

The protein localises to the nucleus. It localises to the cytoplasm. In terms of biological role, associates with NCBP1/CBP80 to form an alternative cap-binding complex (CBC) which plays a key role in mRNA export. NCBP3 serves as adapter protein linking the capped RNAs (m7GpppG-capped RNA) to NCBP1/CBP80. Unlike the conventional CBC with NCBP2 which binds both small nuclear RNA (snRNA) and messenger (mRNA) and is involved in their export from the nucleus, the alternative CBC with NCBP3 does not bind snRNA and associates only with mRNA thereby playing a role in only mRNA export. The alternative CBC is particularly important in cellular stress situations such as virus infections and the NCBP3 activity is critical to inhibit virus growth. In Homo sapiens (Human), this protein is Nuclear cap-binding protein subunit 3.